The following is a 349-amino-acid chain: DNA replication and repair protein RecF (349 aa).

Gly30–Thr37 is an ATP binding site.

This sequence belongs to the RecF family.

Its subcellular location is the cytoplasm. Functionally, the RecF protein is involved in DNA metabolism; it is required for DNA replication and normal SOS inducibility. RecF binds preferentially to single-stranded, linear DNA. It also seems to bind ATP. The protein is DNA replication and repair protein RecF of Francisella tularensis subsp. novicida (strain U112).